We begin with the raw amino-acid sequence, 368 residues long: 3-dehydroquinate synthase (368 aa).

NAD(+) contacts are provided by residues 71–76 (DGEAAK), 105–109 (GATTD), 129–130 (TT), Lys142, and Lys151. Positions 184, 247, and 263 each coordinate Zn(2+).

It belongs to the sugar phosphate cyclases superfamily. Dehydroquinate synthase family. The cofactor is Co(2+). Zn(2+) is required as a cofactor. It depends on NAD(+) as a cofactor.

It is found in the cytoplasm. It carries out the reaction 7-phospho-2-dehydro-3-deoxy-D-arabino-heptonate = 3-dehydroquinate + phosphate. Its pathway is metabolic intermediate biosynthesis; chorismate biosynthesis; chorismate from D-erythrose 4-phosphate and phosphoenolpyruvate: step 2/7. In terms of biological role, catalyzes the conversion of 3-deoxy-D-arabino-heptulosonate 7-phosphate (DAHP) to dehydroquinate (DHQ). This is 3-dehydroquinate synthase from Thermobifida fusca (strain YX).